We begin with the raw amino-acid sequence, 73 residues long: U3-agatoxin-Ao1i (73 aa).

Residues 1–20 (MRTIISLLLLSAMVFAEIEA) form the signal peptide. Residues 21–34 (ISLEEGLQLFEGER) constitute a propeptide that is removed on maturation. Cystine bridges form between Cys-36–Cys-52, Cys-43–Cys-57, Cys-51–Cys-67, and Cys-59–Cys-65. Ser-71 is subject to Serine amide.

It belongs to the neurotoxin 07 (Beta/delta-agtx) family. 03 (aga-4) subfamily. Aga sub-subfamily. In terms of tissue distribution, expressed by the venom gland.

Its subcellular location is the secreted. Its function is as follows. Insecticidal neurotoxin that induces an irreversible spastic paralysis when injected into insects. Modifies presynaptic voltage-gated sodium channels (Nav), causing them to open at the normal resting potential of the nerve. This leads to spontaneous release of neurotransmitter and repetitive action potentials in motor neurons. This chain is U3-agatoxin-Ao1i, found in Agelena orientalis (Funnel-web spider).